We begin with the raw amino-acid sequence, 422 residues long: F-box protein At3g12350 (422 aa).

One can recognise an F-box domain in the interval 5–52 (ALPFCEIPEDLQLRILSLLTPAEISSFACTSKRFASLCQEDGKIWHVM). Basic and acidic residues-rich tracts occupy residues 197 to 207 (NNRREDQRSSG) and 242 to 252 (KEKERQASRTK). 2 disordered regions span residues 197 to 216 (NNRR…LISS) and 226 to 252 (LANK…SRTK).

In Arabidopsis thaliana (Mouse-ear cress), this protein is F-box protein At3g12350.